A 708-amino-acid polypeptide reads, in one-letter code: Assimilatory nitrate reductase (708 aa).

Residues 15–73 enclose the 4Fe-4S Mo/W bis-MGD-type domain; sequence TKQVPTTCMRCAVGCGHVHLGSENAYGLETVRGDPSHPVNNGLACGRGIRESADPAGEW. 4 residues coordinate [4Fe-4S] cluster: C22, C25, C29, and C59. The segment at 586 to 613 is disordered; sequence TTGREADGYNTGVRSRSDTPEEPVARVN.

This sequence belongs to the prokaryotic molybdopterin-containing oxidoreductase family. NasA/NapA/NarB subfamily. As to quaternary structure, is probably a monomer. Initially characterized as a dimer of proteins with a MW of 105 and 50 kDa. [4Fe-4S] cluster serves as cofactor. The cofactor is Mo-bis(molybdopterin guanine dinucleotide).

The protein resides in the cytoplasm. The enzyme catalyses nitrite + 2 oxidized [2Fe-2S]-[ferredoxin] + H2O = nitrate + 2 reduced [2Fe-2S]-[ferredoxin] + 2 H(+). It participates in nitrogen metabolism; nitrate reduction (assimilation). With respect to regulation, inhibited by cyanide and azide. Its function is as follows. Nitrate reductase is a key enzyme involved in the first step of nitrate assimilation. Catalyzes the reduction of nitrate to nitrite, using ferredoxin as the electron donor. Can use reduced methyl viologen but neither NADPH nor NADH as electron donors. The protein is Assimilatory nitrate reductase of Haloferax mediterranei (strain ATCC 33500 / DSM 1411 / JCM 8866 / NBRC 14739 / NCIMB 2177 / R-4) (Halobacterium mediterranei).